A 360-amino-acid chain; its full sequence is Cannabinoid receptor 2 (360 aa).

Over 1–33 the chain is Extracellular; it reads MAGCRELELTNGSNGGLEFNPMKEYMILSDAQQ. The N-linked (GlcNAc...) asparagine glycan is linked to N11. A helical transmembrane segment spans residues 34 to 59; it reads IAVAVLCTLMGLLSALENVAVLYLIL. At 60–71 the chain is on the cytoplasmic side; that stretch reads SSQRLRRKPSYL. The chain crosses the membrane as a helical span at residues 72 to 92; that stretch reads FIGSLAGADFLASVIFACNFV. Residues 93–104 are Extracellular-facing; the sequence is IFHVFHGVDSRN. A helical membrane pass occupies residues 105–129; sequence IFLLKIGSVTMTFTASVGSLLLTAV. Residues 130–149 are Cytoplasmic-facing; it reads DRYLCLCYPPTYKALVTRGR. The chain crosses the membrane as a helical span at residues 150-172; that stretch reads ALVALGVMWVLSALISYLPLMGW. The Extracellular segment spans residues 173-188; sequence TCCPSPCSELFPLIPN. Residues 189-214 traverse the membrane as a helical segment; that stretch reads DYLLGWLLFIAILFSGIIYTYGYVLW. Topologically, residues 215–246 are cytoplasmic; that stretch reads KAHQHVASLAEHQDRQVPGIARMRLDVRLAKT. Residues 247–267 form a helical membrane-spanning segment; it reads LGLVMAVLLICWFPALALMGH. The Extracellular portion of the chain corresponds to 268–279; it reads SLVTTLSDKVKE. Residues 280-301 traverse the membrane as a helical segment; that stretch reads AFAFCSMLCLVNSMINPIIYAL. Residues 302–360 are Cytoplasmic-facing; the sequence is RSGEIRSAAQHCLTGWKKYLQGLGSEGKEEAPKSSVTETEAEVKTTTGPGSRTPGCSNC. Residues 327-360 form a disordered region; the sequence is EGKEEAPKSSVTETEAEVKTTTGPGSRTPGCSNC. A phosphoserine mark is found at S335 and S336. T338 is subject to Phosphothreonine. Polar residues predominate over residues 349 to 360; that stretch reads GPGSRTPGCSNC. S352 bears the Phosphoserine mark.

It belongs to the G-protein coupled receptor 1 family. Constitutively phosphorylated on Ser-352; phosphorylation increases cell internalization and desensitizes the receptor. As to expression, expressed in spleen and brain by neurons and glial cells (at protein level). Expressed in lung, testis and thymus but not in heart, liver or kidney. Expressed in cerebellum, cortex and brainstem.

It localises to the cell membrane. The protein localises to the cell projection. It is found in the dendrite. Its subcellular location is the perikaryon. In terms of biological role, heterotrimeric G protein-coupled receptor for endocannabinoid 2-arachidonoylglycerol mediating inhibition of adenylate cyclase. May function in inflammatory response, nociceptive transmission and bone homeostasis. This Rattus norvegicus (Rat) protein is Cannabinoid receptor 2 (Cnr2).